Consider the following 489-residue polypeptide: Type II restriction enzyme Sau3AI (489 aa).

Mg(2+) serves as cofactor.

The catalysed reaction is Endonucleolytic cleavage of DNA to give specific double-stranded fragments with terminal 5'-phosphates.. Functionally, an E and P subtype restriction enzyme that recognizes the double-stranded sequence 5'-GATC-3' and cleaves before G-1. This Staphylococcus aureus protein is Type II restriction enzyme Sau3AI (sau3AIR).